We begin with the raw amino-acid sequence, 312 residues long: MEDFHHISVLPDEVLQALSPKSGGVYVDGTLGGAGHAGLILTASAPEGRLIGFDRDEEAIAVARQRLSVFGGRVRIIHRNFAGIAQALAEIGVDGIDGFVLDLGVSSHQLDRDERGFSFMHDAPLDMRMDRSSGQSAADLVNTLPEAELYRIISEYGEERWAKRVASFIVKARDERPIETTLELVDVIKGAIPKAKWEERLHPATRTFQALRIAVNEELKSLEEGLQGLLSLLKQGGRGAVISFHSLEDRIVKEGFRAAATGCTCPKELPICVCGRVPRFKLVTRKPITAGESEVAANPRSRSAKLRVVEKI.

S-adenosyl-L-methionine-binding positions include 34–36 (AGH), aspartate 54, phenylalanine 81, aspartate 102, and glutamine 109.

It belongs to the methyltransferase superfamily. RsmH family.

It localises to the cytoplasm. The enzyme catalyses cytidine(1402) in 16S rRNA + S-adenosyl-L-methionine = N(4)-methylcytidine(1402) in 16S rRNA + S-adenosyl-L-homocysteine + H(+). In terms of biological role, specifically methylates the N4 position of cytidine in position 1402 (C1402) of 16S rRNA. The polypeptide is Ribosomal RNA small subunit methyltransferase H (Geobacter sp. (strain M21)).